The sequence spans 424 residues: Tubby protein homolog 1 (424 aa).

The segment at 19 to 47 (MLEDKQKQKRHQSAGSVRTTTTTSSMSMN) is disordered. Over residues 37–47 (TTTTTSSMSMN) the composition is skewed to low complexity.

This sequence belongs to the TUB family. Interacts with rgb-3.

Its subcellular location is the cytoplasm. The protein localises to the cell projection. It localises to the axon. It is found in the dendrite. The protein resides in the cilium. Has a role in fat regulation independent of daf-16. Implicated in ciliar sensory function which is required for normal sensory behavior such as chemotaxis. Functions in life span control via the insulin/IGF-1 pathway. Thought to be involved in neuronal trafficking. The protein is Tubby protein homolog 1 of Caenorhabditis briggsae.